Reading from the N-terminus, the 126-residue chain is Profilin (126 aa).

This sequence belongs to the profilin family. As to quaternary structure, occurs in many kinds of cells as a complex with monomeric actin in a 1:1 ratio.

It is found in the cytoplasm. The protein resides in the cytoskeleton. In terms of biological role, binds to actin and affects the structure of the cytoskeleton. At high concentrations, profilin prevents the polymerization of actin, whereas it enhances it at low concentrations. By binding to PIP2, it inhibits the formation of IP3 and DG. The sequence is that of Profilin from Branchiostoma belcheri (Amphioxus).